The chain runs to 474 residues: tRNA-2-methylthio-N(6)-dimethylallyladenosine synthase (474 aa).

Positions lysine 3 to aspartate 120 constitute an MTTase N-terminal domain. [4Fe-4S] cluster-binding residues include cysteine 12, cysteine 49, cysteine 83, cysteine 157, cysteine 161, and cysteine 164. Residues arginine 143–arginine 375 enclose the Radical SAM core domain. The TRAM domain maps to arginine 378–arginine 441.

This sequence belongs to the methylthiotransferase family. MiaB subfamily. As to quaternary structure, monomer. It depends on [4Fe-4S] cluster as a cofactor.

The protein localises to the cytoplasm. It carries out the reaction N(6)-dimethylallyladenosine(37) in tRNA + (sulfur carrier)-SH + AH2 + 2 S-adenosyl-L-methionine = 2-methylsulfanyl-N(6)-dimethylallyladenosine(37) in tRNA + (sulfur carrier)-H + 5'-deoxyadenosine + L-methionine + A + S-adenosyl-L-homocysteine + 2 H(+). In terms of biological role, catalyzes the methylthiolation of N6-(dimethylallyl)adenosine (i(6)A), leading to the formation of 2-methylthio-N6-(dimethylallyl)adenosine (ms(2)i(6)A) at position 37 in tRNAs that read codons beginning with uridine. This is tRNA-2-methylthio-N(6)-dimethylallyladenosine synthase from Shewanella sediminis (strain HAW-EB3).